A 233-amino-acid chain; its full sequence is MNSYLQFPHRKLFIQFSYSLTSVFRKCQSRTFMNSQFASAKLSNSIKKYFDGRIDESIKYQEIFIRGLENKGKLSKTSLVEALARVRAKPETVLYKVADPNENNKYPICSIISYTELSKLRENQSSRLREAEKSKHKNKTRTRYVLFSWRTDVNDIERKLKSVKDFLQDGNIVEIHVQNKKRSQPVSQEVRDSILSKIQLEIEGLGKDMKPPIVNSHSATFLLQPLVSKSSEL.

Residues 1–39 (MNSYLQFPHRKLFIQFSYSLTSVFRKCQSRTFMNSQFAS) constitute a mitochondrion transit peptide.

It belongs to the IF-3 family.

It localises to the mitochondrion. Functionally, may be involved in mitochondrial translation initiation. The protein is Probable translation initiation factor, mitochondrial of Schizosaccharomyces pombe (strain 972 / ATCC 24843) (Fission yeast).